The chain runs to 1107 residues: Rho GTPase-activating protein 45 (1107 aa).

Residues 1-99 (MFSRKKRELM…SPPESGEGPF (99 aa)) form a disordered region. Residues 37–55 (DSSNDLASSPPSNSSPVSS) are compositionally biased toward low complexity. The span at 56-66 (GTLKRPSSLSR) shows a compositional bias: polar residues. Coiled coils occupy residues 103–132 (EDISQLLGDVARFAERLEKLRDVVQDEELK) and 363–485 (NMRR…QSDQ). The 264-residue stretch at 261 to 524 (EDVDVILQRS…SSKLYDLGQQ (264 aa)) folds into the F-BAR domain. Basic and acidic residues-rich tracts occupy residues 414–423 (NATRAEEEQS), 434–444 (RRAEEEAKNRA), and 573–588 (ENKEISGEERGVERRG). 2 disordered regions span residues 414 to 444 (NATRAEEEQSHSGTRSLDKKRRAEEEAKNRA) and 564 to 595 (FNSQDIPSSENKEISGEERGVERRGGRGHQVH). A Phorbol-ester/DAG-type zinc finger spans residues 671-716 (THRLRKLRTPSKCRECNSYVYFQGAECEECSLACHKKCLETLAIQC). The region spanning 730 to 942 (RDFSETALRS…TLIIFYSTIF (213 aa)) is the Rho-GAP domain. Residues 981–1036 (LTPEYQIPVFKEPGASTVESDSESDGAEDIPGTWKPQTTRGHLTKEASVTSAEDIP) are disordered. Positions 1015-1031 (KPQTTRGHLTKEASVTS) are enriched in polar residues.

The protein localises to the cytoplasm. It is found in the cell projection. Its subcellular location is the ruffle membrane. Its function is as follows. Contains a GTPase activator for the Rho-type GTPases (RhoGAP) domain that would be able to negatively regulate the actin cytoskeleton as well as cell spreading. However, also contains N-terminally a BAR-domin which is able to play an autoinhibitory effect on this RhoGAP activity. In Xenopus laevis (African clawed frog), this protein is Rho GTPase-activating protein 45.